The following is a 644-amino-acid chain: 3D-(3,5/4)-trihydroxycyclohexane-1,2-dione hydrolase (644 aa).

Glu65 contributes to the thiamine diphosphate binding site. Positions 442–522 are thiamine pyrophosphate binding; that stretch reads SLPGDLQRMW…INVLLFDNSG (81 aa). Mg(2+)-binding residues include Asp493 and Asn520.

It belongs to the TPP enzyme family. The cofactor is Mg(2+). Thiamine diphosphate is required as a cofactor.

The enzyme catalyses 3D-3,5/4-trihydroxycyclohexane-1,2-dione + H2O = 5-deoxy-D-glucuronate + H(+). It functions in the pathway polyol metabolism; myo-inositol degradation into acetyl-CoA; acetyl-CoA from myo-inositol: step 3/7. Functionally, involved in the cleavage of the C1-C2 bond of 3D-(3,5/4)-trihydroxycyclohexane-1,2-dione (THcHDO) to yield 5-deoxy-glucuronate (5DG). This is 3D-(3,5/4)-trihydroxycyclohexane-1,2-dione hydrolase from Bacillus anthracis (strain A0248).